The sequence spans 195 residues: IMP cyclohydrolase (195 aa).

Belongs to the archaeal IMP cyclohydrolase family.

The enzyme catalyses IMP + H2O = 5-formamido-1-(5-phospho-D-ribosyl)imidazole-4-carboxamide. It participates in purine metabolism; IMP biosynthesis via de novo pathway; IMP from 5-formamido-1-(5-phospho-D-ribosyl)imidazole-4-carboxamide: step 1/1. Catalyzes the cyclization of 5-formylamidoimidazole-4-carboxamide ribonucleotide to IMP. This Haloquadratum walsbyi (strain DSM 16790 / HBSQ001) protein is IMP cyclohydrolase.